Here is a 642-residue protein sequence, read N- to C-terminus: Threonine--tRNA ligase (642 aa).

The TGS domain occupies 1–61; it reads MPVITLPDGS…DTDAQLAIIT (61 aa). Residues 243–534 form a catalytic region; that stretch reads DHRKIGKQLD…LTEEFAGFFP (292 aa). The Zn(2+) site is built by Cys-334, His-385, and His-511.

The protein belongs to the class-II aminoacyl-tRNA synthetase family. In terms of assembly, homodimer. Requires Zn(2+) as cofactor.

The protein resides in the cytoplasm. The catalysed reaction is tRNA(Thr) + L-threonine + ATP = L-threonyl-tRNA(Thr) + AMP + diphosphate + H(+). Catalyzes the attachment of threonine to tRNA(Thr) in a two-step reaction: L-threonine is first activated by ATP to form Thr-AMP and then transferred to the acceptor end of tRNA(Thr). Also edits incorrectly charged L-seryl-tRNA(Thr). The protein is Threonine--tRNA ligase of Pectobacterium atrosepticum (strain SCRI 1043 / ATCC BAA-672) (Erwinia carotovora subsp. atroseptica).